Consider the following 287-residue polypeptide: Nucleotide-binding protein Dtpsy_0831 (287 aa).

10-17 (GMSGSGKS) serves as a coordination point for ATP. GTP is bound at residue 59-62 (DVRS).

This sequence belongs to the RapZ-like family.

Displays ATPase and GTPase activities. This is Nucleotide-binding protein Dtpsy_0831 from Acidovorax ebreus (strain TPSY) (Diaphorobacter sp. (strain TPSY)).